A 215-amino-acid polypeptide reads, in one-letter code: Uridine kinase (215 aa).

Residue 16 to 23 (GASASGKS) coordinates ATP.

This sequence belongs to the uridine kinase family.

The protein resides in the cytoplasm. It carries out the reaction uridine + ATP = UMP + ADP + H(+). It catalyses the reaction cytidine + ATP = CMP + ADP + H(+). It participates in pyrimidine metabolism; CTP biosynthesis via salvage pathway; CTP from cytidine: step 1/3. The protein operates within pyrimidine metabolism; UMP biosynthesis via salvage pathway; UMP from uridine: step 1/1. This chain is Uridine kinase, found in Aliivibrio salmonicida (strain LFI1238) (Vibrio salmonicida (strain LFI1238)).